Reading from the N-terminus, the 60-residue chain is MDHRLLEIIACPVCNGKLWYNQEKQELICKLDNLAFPLRDGIPVLLETEARSITADESKS.

It belongs to the UPF0434 family.

The sequence is that of UPF0434 protein CKO_02153 from Citrobacter koseri (strain ATCC BAA-895 / CDC 4225-83 / SGSC4696).